A 401-amino-acid chain; its full sequence is Phosphoglycerate kinase (401 aa).

Substrate contacts are provided by residues 21–23 (DLN), Arg36, 59–62 (HQGR), Arg116, and Arg156. ATP contacts are provided by residues Glu331 and 357-360 (GGDT).

It belongs to the phosphoglycerate kinase family.

It localises to the cytoplasm. The enzyme catalyses (2R)-3-phosphoglycerate + ATP = (2R)-3-phospho-glyceroyl phosphate + ADP. The protein operates within carbohydrate degradation; glycolysis; pyruvate from D-glyceraldehyde 3-phosphate: step 2/5. The chain is Phosphoglycerate kinase (pgk) from Haloarcula vallismortis (Halobacterium vallismortis).